Reading from the N-terminus, the 240-residue chain is uncharacterized protein (240 aa).

This is an uncharacterized protein from Thermotoga maritima (strain ATCC 43589 / DSM 3109 / JCM 10099 / NBRC 100826 / MSB8).